We begin with the raw amino-acid sequence, 164 residues long: MERFLENAMYASRWLLAPVYFGLSLALLALSIKFFQEIIHVLPNIFAIAEADLVLTLLSLIDMALVGGLLVMVMFSGYENFVSQLDISDDKEKLSWLGKMDSTSLKSKVAASIVAISSIHLLRVFMDAKNVPDNKLMWYVIIHLTFVLSAFVMGYLDKLTRDKK.

Transmembrane regions (helical) follow at residues 15–35 (LLAP…IKFF), 53–73 (LVLT…LVMV), and 136–156 (LMWY…MGYL).

It belongs to the UPF0114 family.

It localises to the cell membrane. This chain is UPF0114 protein Spro_2386, found in Serratia proteamaculans (strain 568).